A 191-amino-acid chain; its full sequence is Rubrerythrin (191 aa).

In terms of domain architecture, Ferritin-like diiron spans 1–146 (MKSLKGSRTE…DFARNIKEGR (146 aa)). Positions 20, 53, 94, 97, 128, 131, 158, 161, 174, and 177 each coordinate Fe(3+). Residues 153-191 (ATKWRCRNCGYVHEGTGAPELCPACAHPKAHFELLGINW) enclose the Rubredoxin-like domain.

Homodimer. Possesses two rubredoxin-like centers and two non-sulfur oxo-bridged di-iron centers per dimer. The cofactor is Fe(3+).

Its subcellular location is the cytoplasm. Its function is as follows. May provide oxidative stress protection via catalytic reduction of intracellular hydrogen peroxide. This is Rubrerythrin (rbr) from Nitratidesulfovibrio vulgaris (strain ATCC 29579 / DSM 644 / CCUG 34227 / NCIMB 8303 / VKM B-1760 / Hildenborough) (Desulfovibrio vulgaris).